A 120-amino-acid polypeptide reads, in one-letter code: uncharacterized protein (120 aa).

Residues 1-27 (MPKIGVSLIVLIMLIIFLAGCNKNEQN) form the signal peptide.

This is an uncharacterized protein from Bacillus subtilis (strain 168).